The primary structure comprises 439 residues: GTPase Obg (439 aa).

Residues 1-159 (MAFVDQAEIE…RKLKLELKVL (159 aa)) form the Obg domain. Residues 160–336 (ADVGLVGFPS…LMRLTADLLA (177 aa)) form the OBG-type G domain. GTP-binding positions include 166–173 (GFPSAGKS), 191–195 (FTTLS), 213–216 (DLPG), 283–286 (TKMD), and 317–319 (SAL). Positions 173 and 193 each coordinate Mg(2+). Positions 358-439 (DFKPEQHNFT…NSDFVFEFSD (82 aa)) constitute an OCT domain.

The protein belongs to the TRAFAC class OBG-HflX-like GTPase superfamily. OBG GTPase family. As to quaternary structure, monomer. Requires Mg(2+) as cofactor.

It is found in the cytoplasm. Its function is as follows. An essential GTPase which binds GTP, GDP and possibly (p)ppGpp with moderate affinity, with high nucleotide exchange rates and a fairly low GTP hydrolysis rate. Plays a role in control of the cell cycle, stress response, ribosome biogenesis and in those bacteria that undergo differentiation, in morphogenesis control. The sequence is that of GTPase Obg from Leuconostoc citreum (strain KM20).